An 86-amino-acid chain; its full sequence is Small ribosomal subunit protein uS17 (86 aa).

This sequence belongs to the universal ribosomal protein uS17 family. In terms of assembly, part of the 30S ribosomal subunit.

In terms of biological role, one of the primary rRNA binding proteins, it binds specifically to the 5'-end of 16S ribosomal RNA. This is Small ribosomal subunit protein uS17 from Bifidobacterium longum (strain DJO10A).